The sequence spans 199 residues: MAAVTTDLIRELRERTSAGMMDCKKALEENNADIEKAITWLREKGIAKAAKKAGRETKEGRVVSYIHGNGKIGVLVELNSETDFVSKNEDFEALGKEICMQIAAMNPLYLNEESIPAADLEKEKTIMRSQLEAEGKKADQIEKILPGKIKKYVSEVCLVNQAFFKDDSKTIDDLVKEAIAKFGENITIARFIRFQVGGL.

The tract at residues 82–85 (TDFV) is involved in Mg(2+) ion dislocation from EF-Tu.

Belongs to the EF-Ts family.

The protein localises to the cytoplasm. In terms of biological role, associates with the EF-Tu.GDP complex and induces the exchange of GDP to GTP. It remains bound to the aminoacyl-tRNA.EF-Tu.GTP complex up to the GTP hydrolysis stage on the ribosome. This Leptospira interrogans serogroup Icterohaemorrhagiae serovar Lai (strain 56601) protein is Elongation factor Ts.